We begin with the raw amino-acid sequence, 332 residues long: 4-hydroxy-3-methylbut-2-enyl diphosphate reductase (332 aa).

[4Fe-4S] cluster is bound at residue cysteine 34. (2E)-4-hydroxy-3-methylbut-2-enyl diphosphate is bound by residues histidine 63 and histidine 96. Residues histidine 63 and histidine 96 each contribute to the dimethylallyl diphosphate site. The isopentenyl diphosphate site is built by histidine 63 and histidine 96. Cysteine 118 is a binding site for [4Fe-4S] cluster. Histidine 146 is a binding site for (2E)-4-hydroxy-3-methylbut-2-enyl diphosphate. Residue histidine 146 participates in dimethylallyl diphosphate binding. Histidine 146 contributes to the isopentenyl diphosphate binding site. Glutamate 148 functions as the Proton donor in the catalytic mechanism. (2E)-4-hydroxy-3-methylbut-2-enyl diphosphate is bound at residue threonine 186. A [4Fe-4S] cluster-binding site is contributed by cysteine 216. Serine 244, serine 245, asparagine 246, and serine 289 together coordinate (2E)-4-hydroxy-3-methylbut-2-enyl diphosphate. 4 residues coordinate dimethylallyl diphosphate: serine 244, serine 245, asparagine 246, and serine 289. Positions 244, 245, 246, and 289 each coordinate isopentenyl diphosphate.

Belongs to the IspH family. [4Fe-4S] cluster is required as a cofactor.

The catalysed reaction is isopentenyl diphosphate + 2 oxidized [2Fe-2S]-[ferredoxin] + H2O = (2E)-4-hydroxy-3-methylbut-2-enyl diphosphate + 2 reduced [2Fe-2S]-[ferredoxin] + 2 H(+). The enzyme catalyses dimethylallyl diphosphate + 2 oxidized [2Fe-2S]-[ferredoxin] + H2O = (2E)-4-hydroxy-3-methylbut-2-enyl diphosphate + 2 reduced [2Fe-2S]-[ferredoxin] + 2 H(+). The protein operates within isoprenoid biosynthesis; dimethylallyl diphosphate biosynthesis; dimethylallyl diphosphate from (2E)-4-hydroxy-3-methylbutenyl diphosphate: step 1/1. Its pathway is isoprenoid biosynthesis; isopentenyl diphosphate biosynthesis via DXP pathway; isopentenyl diphosphate from 1-deoxy-D-xylulose 5-phosphate: step 6/6. In terms of biological role, catalyzes the conversion of 1-hydroxy-2-methyl-2-(E)-butenyl 4-diphosphate (HMBPP) into a mixture of isopentenyl diphosphate (IPP) and dimethylallyl diphosphate (DMAPP). Acts in the terminal step of the DOXP/MEP pathway for isoprenoid precursor biosynthesis. The polypeptide is 4-hydroxy-3-methylbut-2-enyl diphosphate reductase (Mycobacterium ulcerans (strain Agy99)).